A 329-amino-acid polypeptide reads, in one-letter code: Serpentine receptor class alpha-6 (329 aa).

7 consecutive transmembrane segments (helical) span residues 26-46 (VDLLAIILAFFASYFAIKIVI), 68-88 (LYQISYGIEAIGMLYRGFFML), 104-124 (YFKVLMIGTSGMIFGQTGLLI), 143-163 (IGVCISLIVLVCSTSSGFIIL), 187-207 (NLFSILSTVLTLFNLIVSIFI), 238-258 (ICFLALSQFLWMFMYSFGILI), and 273-293 (FWIAWCYTMPFIALMFPVLLI).

The protein belongs to the nematode receptor-like protein sra family.

The protein resides in the membrane. The chain is Serpentine receptor class alpha-6 (sra-6) from Caenorhabditis elegans.